The following is a 1455-amino-acid chain: Cleavage and polyadenylation specificity factor subunit 1 (1455 aa).

It belongs to the CPSF1 family. In terms of assembly, component of the cleavage and polyadenylation specificity factor (CPSF) complex, composed of at least Clp, Cpsf73, Cpsf100 and Cpsf160.

It localises to the nucleus. Its function is as follows. Component of the cleavage and polyadenylation specificity factor (CPSF) complex that plays a key role in pre-mRNA 3'-end formation, recognizing the AAUAAA signal sequence and interacting with poly(A) polymerase and other factors to bring about cleavage and poly(A) addition. This subunit is involved in the RNA recognition step of the polyadenylation reaction. In Drosophila melanogaster (Fruit fly), this protein is Cleavage and polyadenylation specificity factor subunit 1 (Cpsf160).